The sequence spans 239 residues: Ribosomal RNA small subunit methyltransferase G (239 aa).

Residues glycine 77, phenylalanine 82, 128 to 129 (AE), and arginine 147 each bind S-adenosyl-L-methionine. Positions 216-239 (KKQSQTPKKFPRKPGTPNKSPIEG) are disordered.

It belongs to the methyltransferase superfamily. RNA methyltransferase RsmG family.

It localises to the cytoplasm. In terms of biological role, specifically methylates the N7 position of guanine in position 535 of 16S rRNA. The chain is Ribosomal RNA small subunit methyltransferase G from Bacillus licheniformis (strain ATCC 14580 / DSM 13 / JCM 2505 / CCUG 7422 / NBRC 12200 / NCIMB 9375 / NCTC 10341 / NRRL NRS-1264 / Gibson 46).